The following is a 316-amino-acid chain: Methionyl-tRNA formyltransferase (316 aa).

113–116 is a binding site for (6S)-5,6,7,8-tetrahydrofolate; sequence SLLP.

The protein belongs to the Fmt family.

It catalyses the reaction L-methionyl-tRNA(fMet) + (6R)-10-formyltetrahydrofolate = N-formyl-L-methionyl-tRNA(fMet) + (6S)-5,6,7,8-tetrahydrofolate + H(+). In terms of biological role, attaches a formyl group to the free amino group of methionyl-tRNA(fMet). The formyl group appears to play a dual role in the initiator identity of N-formylmethionyl-tRNA by promoting its recognition by IF2 and preventing the misappropriation of this tRNA by the elongation apparatus. This chain is Methionyl-tRNA formyltransferase, found in Proteus mirabilis (strain HI4320).